The sequence spans 280 residues: MSTARPCAGLRAAVAAGMGLSDGPAGSSRGCRLLRPPAPAPALPGARLLRLPESEAVEAASPERSGWTEALRAAVAELRAGAVVAVPTDTLYGLACSASCSAALSCVYRLKGRSEAKPLAVCLGRVADVYRYCQVRVPRELLEDLFPGPVTLVMERSEELNKDLNPFTPLVGIRIPDHAFMLDLAQMFGGPLALTSANLSSQASSLSVEEFQDLWPHLSLVIDGGPIGDSESPECRLGSTVVDLSVPGKFGIIRSGCALENTTAILQGKYGLLPSQGSCS.

The transit peptide at 1 to 56 directs the protein to the mitochondrion; it reads MSTARPCAGLRAAVAAGMGLSDGPAGSSRGCRLLRPPAPAPALPGARLLRLPESEA. Phosphoserine is present on Ser61. The 191-residue stretch at 68-258 folds into the YrdC-like domain; sequence TEALRAAVAE…KFGIIRSGCA (191 aa).

This sequence belongs to the SUA5 family. In terms of assembly, interacts with RSC1A1.

The protein localises to the cytoplasm. It localises to the mitochondrion. It is found in the cell membrane. The enzyme catalyses L-threonine + hydrogencarbonate + ATP = L-threonylcarbamoyladenylate + diphosphate + H2O. Functionally, cytoplasmic and mitochondrial threonylcarbamoyl-AMP synthase required for the formation of a threonylcarbamoyl group on adenosine at position 37 (t(6)A37) in tRNAs that read codons beginning with adenine. Catalyzes the conversion of L-threonine, HCO(3)(-)/CO(2) and ATP to give threonylcarbamoyl-AMP (TC-AMP) as the acyladenylate intermediate, with the release of diphosphate. Participates in t(6)A37 formation in cytoplasmic and mitochondrial tRNAs. May regulate the activity of some transporters. The sequence is that of Threonylcarbamoyl-AMP synthase from Rattus norvegicus (Rat).